A 278-amino-acid chain; its full sequence is Putative pyruvate, phosphate dikinase regulatory protein (278 aa).

Residue G149 to T156 participates in ADP binding.

It belongs to the pyruvate, phosphate/water dikinase regulatory protein family. PDRP subfamily.

It catalyses the reaction N(tele)-phospho-L-histidyl/L-threonyl-[pyruvate, phosphate dikinase] + ADP = N(tele)-phospho-L-histidyl/O-phospho-L-threonyl-[pyruvate, phosphate dikinase] + AMP + H(+). It carries out the reaction N(tele)-phospho-L-histidyl/O-phospho-L-threonyl-[pyruvate, phosphate dikinase] + phosphate + H(+) = N(tele)-phospho-L-histidyl/L-threonyl-[pyruvate, phosphate dikinase] + diphosphate. In terms of biological role, bifunctional serine/threonine kinase and phosphorylase involved in the regulation of the pyruvate, phosphate dikinase (PPDK) by catalyzing its phosphorylation/dephosphorylation. This Erythrobacter litoralis (strain HTCC2594) protein is Putative pyruvate, phosphate dikinase regulatory protein.